A 213-amino-acid chain; its full sequence is 3-demethoxyubiquinol 3-hydroxylase (213 aa).

6 residues coordinate Fe cation: glutamate 62, glutamate 92, histidine 95, glutamate 144, glutamate 176, and histidine 179.

It belongs to the COQ7 family. Requires Fe cation as cofactor.

Its subcellular location is the cell membrane. It catalyses the reaction a 5-methoxy-2-methyl-3-(all-trans-polyprenyl)benzene-1,4-diol + AH2 + O2 = a 3-demethylubiquinol + A + H2O. It participates in cofactor biosynthesis; ubiquinone biosynthesis. Its function is as follows. Catalyzes the hydroxylation of 2-nonaprenyl-3-methyl-6-methoxy-1,4-benzoquinol during ubiquinone biosynthesis. This chain is 3-demethoxyubiquinol 3-hydroxylase, found in Legionella pneumophila (strain Paris).